We begin with the raw amino-acid sequence, 393 residues long: Protein TsgA (393 aa).

12 consecutive transmembrane segments (helical) span residues 11–31, 51–71, 78–98, 101–121, 134–154, 162–182, 206–226, 245–265, 273–293, 298–318, 332–352, and 361–381; these read WISF…GMVM, FLNA…EIIP, FGFI…SLAL, AAMF…TFLI, LLFT…VAAF, WYWV…LTFG, IGVL…LGFI, ALVS…SFIL, ILTV…TGTQ, WFIL…ITLG, FILT…GPIV, and LLTA…LGFV.

The protein belongs to the major facilitator superfamily. TsgA family.

The protein resides in the cell inner membrane. This chain is Protein TsgA, found in Salmonella schwarzengrund (strain CVM19633).